The sequence spans 525 residues: Lymphocyte activation gene 3 protein (525 aa).

The N-terminal stretch at 1 to 23 is a signal peptide; the sequence is MRQDLFLDLLLLQLLWEAPVVSS. The Extracellular segment spans residues 24–442; that stretch reads GPGKELSVVW…ISGDLKGGHL (419 aa). The Ig-like V-type domain maps to 37-163; that stretch reads GAPVHLPCSL…FSCSLRLRVG (127 aa). Positions 37–246 are interaction with FGL1; the sequence is GAPVHLPCSL…LTYRDGFNVS (210 aa). An intrachain disulfide couples cysteine 44 to cysteine 156. Ig-like C2-type domains follow at residues 164–246, 258–341, and 345–412; these read QASM…FNVS, PVAP…AAVT, and ITVT…EGQK. N-linked (GlcNAc...) asparagine glycosylation is present at asparagine 184. Cysteine 185 and cysteine 235 are oxidised to a cystine. Asparagine 244 and asparagine 309 each carry an N-linked (GlcNAc...) asparagine glycan. 2 cysteine pairs are disulfide-bonded: cysteine 276/cysteine 327 and cysteine 363/cysteine 405. The segment at 422–442 is connecting peptide; that stretch reads ESSSGAWSAKRISGDLKGGHL. A helical transmembrane segment spans residues 443–463; it reads FLSLILGALALFLLVTGAFGF. Topologically, residues 464–525 are cytoplasmic; the sequence is HLWRRQLLRR…PELEPESRQL (62 aa). Residues 486-525 form a disordered region; that stretch reads PVQSKIEELEREPETEMEPETEPDPEPQPEPELEPESRQL. Positions 490–495 match the KIEELE motif motif; it reads KIEELE. The segment covering 490–499 has biased composition (basic and acidic residues); that stretch reads KIEELEREPE. Positions 493–522 are 15 X 2 AA tandem repeats of E-X; it reads ELEREPETEMEPETEPDPEPQPEPELEPES. The segment covering 500–519 has biased composition (acidic residues); sequence TEMEPETEPDPEPQPEPELE.

It belongs to the LAG3 family. As to quaternary structure, interacts with MHC class II (MHC-II); selectively recognizes stable complexes of peptide and MHC-II. Interacts with FGL1 (via the Fibrinogen C-terminal domain). In terms of processing, proteolytically cleaved by ADAM10 and ADAM17 within the connecting peptide region, leading to release of Secreted lymphocyte activation gene 3 protein (sLAG-3). ADAM10 mediates constitutive cleavage, but cleavage increases following T-cell activation, whereas shedding by ADAM17 is induced by TCR signaling in a PRKCQ-dependent manner.

Its subcellular location is the cell membrane. The protein resides in the secreted. In terms of biological role, lymphocyte activation gene 3 protein: Inhibitory receptor on antigen activated T-cells. Delivers inhibitory signals upon binding to ligands, such as FGL1. FGL1 constitutes a major ligand of LAG3 and is responsible for LAG3 T-cell inhibitory function. Following TCR engagement, LAG3 associates with CD3-TCR in the immunological synapse and directly inhibits T-cell activation. May inhibit antigen-specific T-cell activation in synergy with PDCD1/PD-1, possibly by acting as a coreceptor for PDCD1/PD-1. Negatively regulates the proliferation, activation, effector function and homeostasis of both CD8(+) and CD4(+) T-cells. Also mediates immune tolerance: constitutively expressed on a subset of regulatory T-cells (Tregs) and contributes to their suppressive function. Also acts as a negative regulator of plasmacytoid dendritic cell (pDCs) activation. Binds MHC class II (MHC-II); the precise role of MHC-II-binding is however unclear. Functionally, may function as a ligand for MHC class II (MHC-II) on antigen-presenting cells (APC), promoting APC activation/maturation and driving Th1 immune response. In Rattus norvegicus (Rat), this protein is Lymphocyte activation gene 3 protein (Lag3).